We begin with the raw amino-acid sequence, 417 residues long: Serine hydroxymethyltransferase (417 aa).

(6S)-5,6,7,8-tetrahydrofolate-binding positions include Leu-120 and 124 to 126 (GHL). Lys-229 is subject to N6-(pyridoxal phosphate)lysine.

Belongs to the SHMT family. Homodimer. Pyridoxal 5'-phosphate is required as a cofactor.

It localises to the cytoplasm. The catalysed reaction is (6R)-5,10-methylene-5,6,7,8-tetrahydrofolate + glycine + H2O = (6S)-5,6,7,8-tetrahydrofolate + L-serine. The protein operates within one-carbon metabolism; tetrahydrofolate interconversion. It functions in the pathway amino-acid biosynthesis; glycine biosynthesis; glycine from L-serine: step 1/1. Catalyzes the reversible interconversion of serine and glycine with tetrahydrofolate (THF) serving as the one-carbon carrier. This reaction serves as the major source of one-carbon groups required for the biosynthesis of purines, thymidylate, methionine, and other important biomolecules. Also exhibits THF-independent aldolase activity toward beta-hydroxyamino acids, producing glycine and aldehydes, via a retro-aldol mechanism. This chain is Serine hydroxymethyltransferase, found in Anaeromyxobacter sp. (strain K).